The following is a 617-amino-acid chain: Bifunctional TH2 protein, mitochondrial (617 aa).

A mitochondrion-targeting transit peptide spans 1–28; sequence MRFLFPTRLINNSSLGLLRSPHTTAPIR. Asp-107 provides a ligand contact to substrate. The Nucleophile role is filled by Cys-213. Residues Tyr-217 and Tyr-244 each coordinate substrate. The active-site Proton donor is the Glu-286.

It in the N-terminal section; belongs to the TenA family. The protein in the C-terminal section; belongs to the HAD-like hydrolase superfamily.

Its subcellular location is the mitochondrion. The protein localises to the cytoplasm. The enzyme catalyses thiamine phosphate + H2O = thiamine + phosphate. The catalysed reaction is 4-amino-5-aminomethyl-2-methylpyrimidine + H2O = 4-amino-5-hydroxymethyl-2-methylpyrimidine + NH4(+). May be involved in the salvage of thiamine breakdown products. This protein has a haloacid dehalogenase family domain fused to its TenA domain. Phosphatase with the highest activity against thiamine monophosphate (ThMP) and, with a lower activity, against thiamine diphosphate (ThDP), flavin mononucleotide, inorganic pyrophosphate, CTP and dATP. Has a thiamine salvage hydrolase activity, but only against 4-amino-5-aminomethyl-2-methylpyrimidine (amino-HMP) and not against N-formylamino-HMP, desthiothiamine, thiamine, ThMP, and ThDP. The polypeptide is Bifunctional TH2 protein, mitochondrial (Arabidopsis thaliana (Mouse-ear cress)).